We begin with the raw amino-acid sequence, 152 residues long: Prefoldin subunit alpha (152 aa).

The tract at residues 110–152 (ETQEEVDELESESQELEQQAQQMQQQMQQQQMQQMQQSQGDEE) is disordered. Over residues 111–124 (TQEEVDELESESQE) the composition is skewed to acidic residues. Low complexity predominate over residues 125 to 152 (LEQQAQQMQQQMQQQQMQQMQQSQGDEE).

This sequence belongs to the prefoldin alpha subunit family. As to quaternary structure, heterohexamer of two alpha and four beta subunits.

Its subcellular location is the cytoplasm. Molecular chaperone capable of stabilizing a range of proteins. Seems to fulfill an ATP-independent, HSP70-like function in archaeal de novo protein folding. This chain is Prefoldin subunit alpha, found in Halorubrum lacusprofundi (strain ATCC 49239 / DSM 5036 / JCM 8891 / ACAM 34).